A 356-amino-acid polypeptide reads, in one-letter code: Fructose-1,6-bisphosphatase class 1 (356 aa).

Residues glutamate 91, aspartate 113, leucine 115, and aspartate 116 each coordinate Mg(2+). Substrate is bound by residues 116–119 (DGSS) and asparagine 208. Glutamate 280 provides a ligand contact to Mg(2+).

Belongs to the FBPase class 1 family. In terms of assembly, homotetramer. It depends on Mg(2+) as a cofactor.

Its subcellular location is the cytoplasm. It catalyses the reaction beta-D-fructose 1,6-bisphosphate + H2O = beta-D-fructose 6-phosphate + phosphate. The protein operates within carbohydrate biosynthesis; gluconeogenesis. This Methylacidiphilum infernorum (isolate V4) (Methylokorus infernorum (strain V4)) protein is Fructose-1,6-bisphosphatase class 1.